The primary structure comprises 257 residues: 3-deoxy-manno-octulosonate cytidylyltransferase (257 aa).

It belongs to the KdsB family.

It is found in the cytoplasm. It catalyses the reaction 3-deoxy-alpha-D-manno-oct-2-ulosonate + CTP = CMP-3-deoxy-beta-D-manno-octulosonate + diphosphate. Its pathway is nucleotide-sugar biosynthesis; CMP-3-deoxy-D-manno-octulosonate biosynthesis; CMP-3-deoxy-D-manno-octulosonate from 3-deoxy-D-manno-octulosonate and CTP: step 1/1. It participates in bacterial outer membrane biogenesis; lipopolysaccharide biosynthesis. Functionally, activates KDO (a required 8-carbon sugar) for incorporation into bacterial lipopolysaccharide in Gram-negative bacteria. In Stenotrophomonas maltophilia (strain K279a), this protein is 3-deoxy-manno-octulosonate cytidylyltransferase.